We begin with the raw amino-acid sequence, 96 residues long: Iron-sulfur cluster assembly protein CyaY (96 aa).

This sequence belongs to the frataxin family.

Its function is as follows. Involved in iron-sulfur (Fe-S) cluster assembly. May act as a regulator of Fe-S biogenesis. The polypeptide is Iron-sulfur cluster assembly protein CyaY (Rickettsia bellii (strain RML369-C)).